Consider the following 122-residue polypeptide: Small ribosomal subunit protein bS6 (122 aa).

It belongs to the bacterial ribosomal protein bS6 family.

Functionally, binds together with bS18 to 16S ribosomal RNA. In Trichlorobacter lovleyi (strain ATCC BAA-1151 / DSM 17278 / SZ) (Geobacter lovleyi), this protein is Small ribosomal subunit protein bS6.